A 748-amino-acid polypeptide reads, in one-letter code: ATP-dependent rRNA helicase SPB4 (748 aa).

A Q motif motif is present at residues 15 to 43 (WAKLNPPLSPWILDVINSMGFKNMTPVQA). A Helicase ATP-binding domain is found at 46–260 (IPRAVKNQDC…GLGLRNPVRI (215 aa)). 59 to 66 (AVTGSGKT) contributes to the ATP binding site. The segment at 119-156 (ESEEETGDVEAHAPPFASSSRSPSPQTPDKPLFPLPML) is disordered. The span at 132-142 (PPFASSSRSPS) shows a compositional bias: low complexity. Positions 143-152 (PQTPDKPLFP) are enriched in pro residues. A DEAD box motif is present at residues 207-210 (DEAD). The region spanning 295 to 460 (KTLQLIRLLL…KAQRSILDFL (166 aa)) is the Helicase C-terminal domain. Residues 614–748 (AQRADNQSSN…IGGGMFDDLE (135 aa)) form a disordered region. 2 stretches are compositionally biased toward basic and acidic residues: residues 626–669 (ARAE…KYEW) and 708–730 (EIGK…KESS). Over residues 732–748 (GGAGGGGIGGGMFDDLE) the composition is skewed to gly residues.

It belongs to the DEAD box helicase family. DDX55/SPB4 subfamily. Component of pre-60S ribosomal complexes.

The protein resides in the nucleus. It localises to the nucleolus. The catalysed reaction is ATP + H2O = ADP + phosphate + H(+). Functionally, ATP-binding RNA helicase involved in the biogenesis of 60S ribosomal subunits. Binds 90S pre-ribosomal particles and dissociates from pre-60S ribosomal particles after processing of 27SB pre-rRNA. Required for the normal formation of 18S rRNA through the processing of pre-rRNAs at sites A0, A1 and A2, and the normal formation of 25S and 5.8S rRNAs through the processing of pre-rRNAs at sites C1 and C2. The polypeptide is ATP-dependent rRNA helicase SPB4 (Cryptococcus neoformans var. neoformans serotype D (strain B-3501A) (Filobasidiella neoformans)).